A 170-amino-acid chain; its full sequence is Peptide deformylase (170 aa).

2 residues coordinate Fe cation: cysteine 91 and histidine 133. Glutamate 134 is an active-site residue. Histidine 137 contributes to the Fe cation binding site.

It belongs to the polypeptide deformylase family. Fe(2+) serves as cofactor.

It catalyses the reaction N-terminal N-formyl-L-methionyl-[peptide] + H2O = N-terminal L-methionyl-[peptide] + formate. Its function is as follows. Removes the formyl group from the N-terminal Met of newly synthesized proteins. Requires at least a dipeptide for an efficient rate of reaction. N-terminal L-methionine is a prerequisite for activity but the enzyme has broad specificity at other positions. The chain is Peptide deformylase from Aliivibrio fischeri (strain ATCC 700601 / ES114) (Vibrio fischeri).